The primary structure comprises 171 residues: Putative phosphoesterase BPUM_1117 (171 aa).

His-34 (proton donor) is an active-site residue. 2 consecutive short sequence motifs (HXTX) follow at residues 34-37 (HLTL) and 115-118 (HVTV). His-115 serves as the catalytic Proton acceptor.

This sequence belongs to the 2H phosphoesterase superfamily. YjcG family.

The chain is Putative phosphoesterase BPUM_1117 from Bacillus pumilus (strain SAFR-032).